The primary structure comprises 363 residues: Protein-glutamate methylesterase/protein-glutamine glutaminase 2 (363 aa).

A Response regulatory domain is found at 6–123 (RVLIVDDSAS…AQFLLESKIH (118 aa)). D57 carries the post-translational modification 4-aspartylphosphate. In terms of domain architecture, CheB-type methylesterase spans 172–363 (ARTTESVICI…AMEILRAGNR (192 aa)). Residues S184, H210, and D306 contribute to the active site.

The protein belongs to the CheB family. In terms of processing, phosphorylated by CheA. Phosphorylation of the N-terminal regulatory domain activates the methylesterase activity.

It localises to the cytoplasm. The enzyme catalyses [protein]-L-glutamate 5-O-methyl ester + H2O = L-glutamyl-[protein] + methanol + H(+). It carries out the reaction L-glutaminyl-[protein] + H2O = L-glutamyl-[protein] + NH4(+). In terms of biological role, involved in chemotaxis. Part of a chemotaxis signal transduction system that modulates chemotaxis in response to various stimuli. Catalyzes the demethylation of specific methylglutamate residues introduced into the chemoreceptors (methyl-accepting chemotaxis proteins or MCP) by CheR. Also mediates the irreversible deamidation of specific glutamine residues to glutamic acid. This chain is Protein-glutamate methylesterase/protein-glutamine glutaminase 2, found in Rhodospirillum rubrum (strain ATCC 11170 / ATH 1.1.1 / DSM 467 / LMG 4362 / NCIMB 8255 / S1).